The following is a 415-amino-acid chain: Ribulose bisphosphate carboxylase large chain (415 aa).

Asn-101 and Thr-151 together coordinate substrate. The Proton acceptor role is filled by Lys-153. A substrate-binding site is contributed by Lys-155. Residues Lys-179, Asp-181, and Glu-182 each contribute to the Mg(2+) site. Lys-179 bears the N6-carboxylysine mark. His-272 acts as the Proton acceptor in catalysis. Arg-273, His-305, and Ser-357 together coordinate substrate.

This sequence belongs to the RuBisCO large chain family. Type I subfamily. In terms of assembly, heterohexadecamer of 8 large chains and 8 small chains; disulfide-linked. The disulfide link is formed within the large subunit homodimers. The cofactor is Mg(2+). Post-translationally, the disulfide bond which can form in the large chain dimeric partners within the hexadecamer appears to be associated with oxidative stress and protein turnover.

Its subcellular location is the plastid. The protein resides in the chloroplast. The enzyme catalyses 2 (2R)-3-phosphoglycerate + 2 H(+) = D-ribulose 1,5-bisphosphate + CO2 + H2O. The catalysed reaction is D-ribulose 1,5-bisphosphate + O2 = 2-phosphoglycolate + (2R)-3-phosphoglycerate + 2 H(+). In terms of biological role, ruBisCO catalyzes two reactions: the carboxylation of D-ribulose 1,5-bisphosphate, the primary event in carbon dioxide fixation, as well as the oxidative fragmentation of the pentose substrate in the photorespiration process. Both reactions occur simultaneously and in competition at the same active site. This chain is Ribulose bisphosphate carboxylase large chain, found in Cibotium barometz (Scythian lamb).